Consider the following 346-residue polypeptide: Dihydroorotase (346 aa).

Zn(2+) contacts are provided by His-17 and His-19. Residues 19–21 (HVR) and Asn-45 contribute to the substrate site. Lys-102, His-139, and His-177 together coordinate Zn(2+). N6-carboxylysine is present on Lys-102. Residue His-139 coordinates substrate. Leu-222 contacts substrate. Position 250 (Asp-250) interacts with Zn(2+). The active site involves Asp-250. The substrate site is built by His-254 and Ala-266.

Belongs to the metallo-dependent hydrolases superfamily. DHOase family. Class II DHOase subfamily. As to quaternary structure, homodimer. The cofactor is Zn(2+).

It catalyses the reaction (S)-dihydroorotate + H2O = N-carbamoyl-L-aspartate + H(+). Its pathway is pyrimidine metabolism; UMP biosynthesis via de novo pathway; (S)-dihydroorotate from bicarbonate: step 3/3. Functionally, catalyzes the reversible cyclization of carbamoyl aspartate to dihydroorotate. This is Dihydroorotase from Delftia acidovorans (strain DSM 14801 / SPH-1).